Reading from the N-terminus, the 534-residue chain is Peptide chain release factor 3 (534 aa).

One can recognise a tr-type G domain in the interval 9 to 278 (ARRRTFAIIS…FFVEHAPPPQ (270 aa)). Residues 18–25 (SHPDAGKT), 86–90 (DTPGH), and 140–143 (NKLD) each bind GTP.

The protein belongs to the TRAFAC class translation factor GTPase superfamily. Classic translation factor GTPase family. PrfC subfamily.

The protein localises to the cytoplasm. Its function is as follows. Increases the formation of ribosomal termination complexes and stimulates activities of RF-1 and RF-2. It binds guanine nucleotides and has strong preference for UGA stop codons. It may interact directly with the ribosome. The stimulation of RF-1 and RF-2 is significantly reduced by GTP and GDP, but not by GMP. The protein is Peptide chain release factor 3 of Xanthomonas campestris pv. campestris (strain 8004).